The chain runs to 341 residues: Methionine import ATP-binding protein MetN 1 (341 aa).

Residues 2-241 (IKLNQIVKRY…PQHEVTKRFV (240 aa)) enclose the ABC transporter domain. 38 to 45 (GFSGAGKS) is a binding site for ATP.

This sequence belongs to the ABC transporter superfamily. Methionine importer (TC 3.A.1.24) family. In terms of assembly, the complex is composed of two ATP-binding proteins (MetN), two transmembrane proteins (MetI) and a solute-binding protein (MetQ).

It localises to the cell membrane. It catalyses the reaction L-methionine(out) + ATP + H2O = L-methionine(in) + ADP + phosphate + H(+). It carries out the reaction D-methionine(out) + ATP + H2O = D-methionine(in) + ADP + phosphate + H(+). Part of the ABC transporter complex MetNIQ involved in methionine import. Responsible for energy coupling to the transport system. This is Methionine import ATP-binding protein MetN 1 from Staphylococcus epidermidis (strain ATCC 12228 / FDA PCI 1200).